The primary structure comprises 366 residues: Ribosomal RNA large subunit methyltransferase M (366 aa).

S-adenosyl-L-methionine contacts are provided by residues serine 188, 221–224, aspartate 240, aspartate 260, and aspartate 277; that span reads CPGG. Residue lysine 306 is the Proton acceptor of the active site.

This sequence belongs to the class I-like SAM-binding methyltransferase superfamily. RNA methyltransferase RlmE family. RlmM subfamily. Monomer.

Its subcellular location is the cytoplasm. The enzyme catalyses cytidine(2498) in 23S rRNA + S-adenosyl-L-methionine = 2'-O-methylcytidine(2498) in 23S rRNA + S-adenosyl-L-homocysteine + H(+). Functionally, catalyzes the 2'-O-methylation at nucleotide C2498 in 23S rRNA. This chain is Ribosomal RNA large subunit methyltransferase M, found in Pectobacterium atrosepticum (strain SCRI 1043 / ATCC BAA-672) (Erwinia carotovora subsp. atroseptica).